The following is a 181-amino-acid chain: MSKADKALLIVDMINNFEFDMGETLAKKTEKIVPHILSLKEHARQNEWPIIYINDHYGLWQADIKNIQQECTNERSKDIITKIAPVDADYFLIKPKHSAFYETALHTLLTELQVRHIIITGIAGNICVLFTANDAYMREYSITIPKDCIASNSDEDNEFALTMMENVLFAEITTEEQIIEK.

This sequence belongs to the isochorismatase family.

This is an uncharacterized protein from Bacillus subtilis (strain 168).